The following is a 623-amino-acid chain: Protein EDS1L (623 aa).

At A2 the chain carries N-acetylalanine. S123 acts as the Nucleophile in catalysis. Residues D187 and H317 each act as charge relay system in the active site.

As to quaternary structure, homodimer. Interacts with RPS4, RPS6, SNC1, SRFR1, AvrRps4 and HopA1. Interacts with PAD4 (via N-terminus). Interacts with SAG101. EDS1-SAG101 and EDS1-PAD4 form separate complexes in pathogen-unchallenged cells.

Its subcellular location is the nucleus. It localises to the cytoplasm. The protein localises to the microsome. Positive regulator of basal resistance and of effector-triggered immunity specifically mediated by TIR-NB-LRR resistance proteins. Disruption by bacterial effector of EDS1-TIR-NB-LRR resistance protein interactions constitutes the first step in resistance activation. Triggers early plant defenses and hypersensitive response independently of PAD4, and then recruits PAD4 to potentiate plant defenses through the accumulation of salicylic acid. Nuclear localization is essential for basal and TIR-NB-LRR-conditioned immunity and for reprogramming defense gene expression, while cytoplasmic EDS1 is required to induce a complete immune response. Heterodimerization with PAD4 or SGA101 is necessary for TNL-mediated effector-triggered immunity. Contributes to nonhost resistance against E.amylovora. Has no direct lipase activity. The sequence is that of Protein EDS1L from Arabidopsis thaliana (Mouse-ear cress).